Consider the following 724-residue polypeptide: Eukaryotic elongation factor 2 kinase (724 aa).

The residue at position 2 (A2) is an N-acetylalanine. S27 bears the Phosphoserine mark. S61 is subject to Phosphoserine; by autocatalysis. A phosphoserine mark is found at S70, S73, and S77. The tract at residues 80–93 (FKEAWKHAIEKAKH) is calmodulin-binding. The Alpha-type protein kinase domain maps to 115–325 (RYNAVTGEWL…ICQSMGLTPF (211 aa)). Phosphoserine is present on S242. 295–301 (GDGNLGV) provides a ligand contact to ATP. A phosphothreonine; by autocatalysis mark is found at T347 and T352. The segment at 353-476 (EEKCGSPRIR…HESDEDSLGS (124 aa)) is disordered. S358 is modified (phosphoserine; by MAPK13 and CDK1). The span at 358 to 376 (SPRIRTLSSSRPPLLLRLS) shows a compositional bias: low complexity. A Phosphoserine; by autocatalysis, RPS6KA1 and RPS6KB1 modification is found at S365. Residues 385 to 403 (SDVTFDSLPSSPSSATPHS) are compositionally biased toward polar residues. Residue S391 is modified to Phosphoserine. Phosphoserine; by AMPK is present on S397. 2 stretches are compositionally biased toward basic and acidic residues: residues 421 to 435 (GPRD…RDSE) and 444 to 469 (SEKR…RHES). S434, S444, and S469 each carry phosphoserine. S473 carries the phosphoserine; by autocatalysis modification. S476 carries the phosphoserine modification. A Phosphoserine; by PKA modification is found at S499.

This sequence belongs to the protein kinase superfamily. Alpha-type protein kinase family. Monomer or homodimer. Interacts with Calmodulin/CALM1; this interaction is strictly required for phosphorylation activity. Autophosphorylated at multiple residues, Thr-347 being the major site. Phosphorylated by AMP-activated protein kinase AMPK at Ser-397 leading to EEF2K activation and protein synthesis inhibition. Phosphorylated by TRPM7 at Ser-77 resulting in improved protein stability, higher EE2F phosphorylated and subsequently reduced rate of protein synthesis. Phosphorylation by other kinases such as CDK1 and MAPK13 at Ser-358 or RPS6KA1 and RPS6KB1 at Ser-365 instead decrease EEF2K activity and promote protein synthesis. In terms of tissue distribution, ubiquitously expressed. Particularly abundant in skeletal muscle and heart.

It catalyses the reaction [translation elongation factor 2] + ATP = [translation elongation factor 2]-phosphate + ADP + H(+). Its activity is regulated as follows. Undergoes calcium/calmodulin-dependent intramolecular autophosphorylation, and this results in it becoming partially calcium/calmodulin-independent. Threonine kinase that regulates protein synthesis by controlling the rate of peptide chain elongation. Upon activation by a variety of upstream kinases including AMPK or TRPM7, phosphorylates the elongation factor EEF2 at a single site, renders it unable to bind ribosomes and thus inactive. In turn, the rate of protein synthesis is reduced. This chain is Eukaryotic elongation factor 2 kinase (Eef2k), found in Mus musculus (Mouse).